Reading from the N-terminus, the 461-residue chain is Protein eva-1 (461 aa).

The N-terminal stretch at 1–22 (MNMHIVSPVLLLFWFGIIVTDG) is a signal peptide. The SUEL-type lectin domain occupies 55–160 (ACDGERITLS…KYLQMAYGCI (106 aa)). The chain crosses the membrane as a helical span at residues 370 to 390 (VMCIVLAVSMAAIVVLSACII). The disordered stretch occupies residues 397-429 (NKDSSRSSRRSRSRRSLETSKLVSSNYGGSITP). The span at 415-429 (TSKLVSSNYGGSITP) shows a compositional bias: polar residues.

This sequence belongs to the EVA1 family. As to quaternary structure, interacts with sax-3. Interacts with slt-1. Interacts (via the SUEL-type lectin domain) with madd-4. Interacts (via the transmembrane domain) with unc-40.

The protein localises to the cell membrane. Acts as a receptor for slt-1. Required for the guidance of the AVM pioneer axon to the ventral nerve cord. Acts as a unc-40 coreceptor to enhance the sensitivity of unc-40 to the madd-4 midline guidance cue to guide muscle arm extensions (muscle arms) and AVM mechanosensory axons towards the dorsoventral midline. This Caenorhabditis elegans protein is Protein eva-1 (eva-1).